Here is a 271-residue protein sequence, read N- to C-terminus: Tryptophan synthase alpha chain (271 aa).

Catalysis depends on proton acceptor residues Glu56 and Asp67.

It belongs to the TrpA family. Tetramer of two alpha and two beta chains.

It carries out the reaction (1S,2R)-1-C-(indol-3-yl)glycerol 3-phosphate + L-serine = D-glyceraldehyde 3-phosphate + L-tryptophan + H2O. It participates in amino-acid biosynthesis; L-tryptophan biosynthesis; L-tryptophan from chorismate: step 5/5. Its function is as follows. The alpha subunit is responsible for the aldol cleavage of indoleglycerol phosphate to indole and glyceraldehyde 3-phosphate. The protein is Tryptophan synthase alpha chain of Mycobacterium avium (strain 104).